Consider the following 126-residue polypeptide: Protein ApaG (126 aa).

The ApaG domain occupies 2-126 (SQVESPIKIK…FRLAVPGIFQ (125 aa)).

This chain is Protein ApaG, found in Shewanella frigidimarina (strain NCIMB 400).